A 200-amino-acid polypeptide reads, in one-letter code: 7-methyl-GTP pyrophosphatase (200 aa).

D69 (proton acceptor) is an active-site residue.

Belongs to the Maf family. YceF subfamily. It depends on a divalent metal cation as a cofactor.

The protein localises to the cytoplasm. It catalyses the reaction N(7)-methyl-GTP + H2O = N(7)-methyl-GMP + diphosphate + H(+). Functionally, nucleoside triphosphate pyrophosphatase that hydrolyzes 7-methyl-GTP (m(7)GTP). May have a dual role in cell division arrest and in preventing the incorporation of modified nucleotides into cellular nucleic acids. This is 7-methyl-GTP pyrophosphatase from Colwellia psychrerythraea (strain 34H / ATCC BAA-681) (Vibrio psychroerythus).